Here is a 391-residue protein sequence, read N- to C-terminus: Phosphoglycerate kinase (391 aa).

Substrate-binding positions include 21 to 23 (DLN), Arg36, 59 to 62 (HLGR), Arg113, and Arg146. ATP contacts are provided by residues Lys197, Glu319, and 345–348 (GGDT).

It belongs to the phosphoglycerate kinase family. Monomer.

The protein resides in the cytoplasm. The enzyme catalyses (2R)-3-phosphoglycerate + ATP = (2R)-3-phospho-glyceroyl phosphate + ADP. It participates in carbohydrate degradation; glycolysis; pyruvate from D-glyceraldehyde 3-phosphate: step 2/5. In Shewanella sp. (strain MR-4), this protein is Phosphoglycerate kinase.